The following is a 501-amino-acid chain: Mitogen-activated protein kinase 16 (501 aa).

Residues 22 to 313 (YEVTEVVGKG…AAEALTDPYF (292 aa)) enclose the Protein kinase domain. ATP contacts are provided by residues 28–36 (VGKGSYGVV) and K51. D148 functions as the Proton acceptor in the catalytic mechanism. Phosphothreonine is present on T184. Residues 184–186 (TDY) carry the TXY motif. Y186 carries the phosphotyrosine modification. A disordered region spans residues 477–501 (DEESMSEYMNEAADGVPHKIAQLKT).

Belongs to the protein kinase superfamily. CMGC Ser/Thr protein kinase family. MAP kinase subfamily. Post-translationally, dually phosphorylated on Thr-184 and Tyr-186, which activates the enzyme.

It carries out the reaction L-seryl-[protein] + ATP = O-phospho-L-seryl-[protein] + ADP + H(+). The enzyme catalyses L-threonyl-[protein] + ATP = O-phospho-L-threonyl-[protein] + ADP + H(+). Its activity is regulated as follows. Activated by threonine and tyrosine phosphorylation. The sequence is that of Mitogen-activated protein kinase 16 (MPK16) from Oryza sativa subsp. japonica (Rice).